The sequence spans 563 residues: Beta-catenin-like protein 1 (563 aa).

Methionine 1 carries the N-acetylmethionine modification. Residues 1-81 are disordered; the sequence is MDVGELLSYQ…EEEEPLDESS (81 aa). A Nuclear localization signal motif is present at residues 16-33; it reads KRPRDDEEEELKTRRKQT. Positions 34-45 are enriched in basic and acidic residues; that stretch reads GPRERGRYREEE. The span at 66–78 shows a compositional bias: acidic residues; sequence DGEEEEEEEEPLD. HEAT repeat units lie at residues 79–129 and 134–176; these read ESSV…VVAT and YHLL…TLHE. N6-acetyllysine is present on lysine 91. The short motif at 130-140 is the Nuclear export signal (NES) element; the sequence is MPDLYHLLVEL. 5 ARM repeats span residues 178-228, 229-273, 274-323, 325-363, and 364-417; these read EEGA…MAEF, RPEM…LQDN, DENR…CLML, SNRE…AMIG, and PEGT…LLRN. At serine 389 the chain carries Phosphoserine. The stretch at 476-540 forms a coiled coil; the sequence is DMEDEFYLRR…HIIKEYAENI (65 aa). Serine 545 carries the phosphoserine modification.

As to quaternary structure, component of the PRP19-CDC5L splicing complex composed of a core complex comprising a homotetramer of PRPF19, CDC5L, PLRG1 and BCAS2, and at least three less stably associated proteins CTNNBL1, CWC15 and HSPA8. Interacts directly with CWC15 and CDC5L in the complex. Interacts with AICDA; the interaction is important for the antibody diversification activity of AICDA. Interacts with PRPF31 (via its NLS). Interacts (via its N-terminal NLS) with KPNA1 and KPNA2.

The protein resides in the nucleus. Component of the PRP19-CDC5L complex that forms an integral part of the spliceosome and is required for activating pre-mRNA splicing. Participates in AID/AICDA-mediated somatic hypermutation (SHM) and class-switch recombination (CSR), 2 processes resulting in the production of high-affinity, mutated isotype-switched antibodies. The protein is Beta-catenin-like protein 1 (Ctnnbl1) of Mus musculus (Mouse).